A 176-amino-acid chain; its full sequence is Isopentenyl-diphosphate Delta-isomerase 1 (176 aa).

The Mn(2+) site is built by His23 and His30. In terms of domain architecture, Nudix hydrolase spans 28-162 (HLHRAFSCFI…EEFCTPWFKK (135 aa)). Residue Cys65 is part of the active site. Cys65 contributes to the Mg(2+) binding site. His67 is a Mn(2+) binding site. Glu85 serves as a coordination point for Mg(2+). Positions 112 and 114 each coordinate Mn(2+). Residue Glu114 is part of the active site.

It belongs to the IPP isomerase type 1 family. As to quaternary structure, homodimer. Requires Mg(2+) as cofactor. Mn(2+) is required as a cofactor.

Its subcellular location is the cytoplasm. It catalyses the reaction isopentenyl diphosphate = dimethylallyl diphosphate. It participates in isoprenoid biosynthesis; dimethylallyl diphosphate biosynthesis; dimethylallyl diphosphate from isopentenyl diphosphate: step 1/1. Its function is as follows. Catalyzes the 1,3-allylic rearrangement of the homoallylic substrate isopentenyl (IPP) to its highly electrophilic allylic isomer, dimethylallyl diphosphate (DMAPP). In Photorhabdus laumondii subsp. laumondii (strain DSM 15139 / CIP 105565 / TT01) (Photorhabdus luminescens subsp. laumondii), this protein is Isopentenyl-diphosphate Delta-isomerase 1.